Reading from the N-terminus, the 500-residue chain is NAD(P)H-quinone oxidoreductase chain 4, chloroplastic (500 aa).

A run of 14 helical transmembrane segments spans residues 4-24 (FPWLTIIVVFPILTGSLIFLL), 37-57 (LCICILELLLTTYTFCYHFQL), 87-107 (IGPILLTGFITTLATLAAWPV), 111-131 (AQLFHFLMLAMYSGQIGSFSS), 134-154 (LLLFFLMWEFELIPVYLLLSM), 167-187 (FILYTAGGSIFLLIGVLGIGL), 208-228 (ALEVIFYVGFLIAFAVKLPII), 242-262 (HYSTCMLLAGILLKMGAYGLV), 272-292 (AHCLFSPGLIIVGAIQIIYAA), 305-325 (IAYSSISHMGFIIIGIGSLSD), 330-350 (GAILQIISHGFIGAALFFLAG), 386-406 (LALPGLSGFVAELLVFFGIIT), 416-436 (ILIAFLMAIGMILTPIYSLSM), and 462-482 (LFVSISLLLPIIGIGIYPDFV).

This sequence belongs to the complex I subunit 4 family.

It is found in the plastid. Its subcellular location is the chloroplast thylakoid membrane. The enzyme catalyses a plastoquinone + NADH + (n+1) H(+)(in) = a plastoquinol + NAD(+) + n H(+)(out). The catalysed reaction is a plastoquinone + NADPH + (n+1) H(+)(in) = a plastoquinol + NADP(+) + n H(+)(out). The polypeptide is NAD(P)H-quinone oxidoreductase chain 4, chloroplastic (Oenothera biennis (German evening primrose)).